We begin with the raw amino-acid sequence, 184 residues long: Ribosome-recycling factor (184 aa).

This sequence belongs to the RRF family.

Its subcellular location is the cytoplasm. Functionally, responsible for the release of ribosomes from messenger RNA at the termination of protein biosynthesis. May increase the efficiency of translation by recycling ribosomes from one round of translation to another. This is Ribosome-recycling factor from Borrelia turicatae (strain 91E135).